An 85-amino-acid polypeptide reads, in one-letter code: Putative membrane protein insertion efficiency factor (85 aa).

This sequence belongs to the UPF0161 family.

It localises to the cell inner membrane. In terms of biological role, could be involved in insertion of integral membrane proteins into the membrane. The protein is Putative membrane protein insertion efficiency factor of Shewanella sediminis (strain HAW-EB3).